The following is a 116-amino-acid chain: Large ribosomal subunit protein uL18 (116 aa).

Belongs to the universal ribosomal protein uL18 family. In terms of assembly, part of the 50S ribosomal subunit; part of the 5S rRNA/L5/L18/L25 subcomplex. Contacts the 5S and 23S rRNAs.

In terms of biological role, this is one of the proteins that bind and probably mediate the attachment of the 5S RNA into the large ribosomal subunit, where it forms part of the central protuberance. In Ectopseudomonas mendocina (strain ymp) (Pseudomonas mendocina), this protein is Large ribosomal subunit protein uL18.